A 646-amino-acid chain; its full sequence is Translation initiation factor IF-2 (646 aa).

A tr-type G domain is found at 146–315; the sequence is PRPPVVTVMG…LLVAEMEELR (170 aa). The G1 stretch occupies residues 155-162; that stretch reads GHVDHGKT. Residue 155 to 162 coordinates GTP; it reads GHVDHGKT. The interval 180-184 is G2; it reads GITQH. The G3 stretch occupies residues 201 to 204; it reads DTPG. GTP is bound by residues 201–205 and 255–258; these read DTPGH and NKID. The G4 stretch occupies residues 255 to 258; sequence NKID. The G5 stretch occupies residues 291–293; sequence SAK.

The protein belongs to the TRAFAC class translation factor GTPase superfamily. Classic translation factor GTPase family. IF-2 subfamily.

Its subcellular location is the cytoplasm. Functionally, one of the essential components for the initiation of protein synthesis. Protects formylmethionyl-tRNA from spontaneous hydrolysis and promotes its binding to the 30S ribosomal subunits. Also involved in the hydrolysis of GTP during the formation of the 70S ribosomal complex. The polypeptide is Translation initiation factor IF-2 (Clostridioides difficile (strain 630) (Peptoclostridium difficile)).